A 171-amino-acid chain; its full sequence is uncharacterized protein (171 aa).

This sequence belongs to the transferase hexapeptide repeat family.

This is an uncharacterized protein from Bacillus subtilis (strain 168).